A 396-amino-acid chain; its full sequence is Argininosuccinate synthase (396 aa).

9 to 17 (AFSGGLDTT) is an ATP binding site. Tyr-86 provides a ligand contact to L-citrulline. An ATP-binding site is contributed by Gly-116. Residues Thr-118, Asn-122, and Asp-123 each coordinate L-aspartate. Residue Asn-122 participates in L-citrulline binding. 5 residues coordinate L-citrulline: Arg-126, Ser-172, Ser-181, Glu-254, and Tyr-266.

It belongs to the argininosuccinate synthase family. Type 1 subfamily. As to quaternary structure, homotetramer.

The protein resides in the cytoplasm. The enzyme catalyses L-citrulline + L-aspartate + ATP = 2-(N(omega)-L-arginino)succinate + AMP + diphosphate + H(+). The protein operates within amino-acid biosynthesis; L-arginine biosynthesis; L-arginine from L-ornithine and carbamoyl phosphate: step 2/3. The protein is Argininosuccinate synthase of Halobacterium salinarum (strain ATCC 700922 / JCM 11081 / NRC-1) (Halobacterium halobium).